A 183-amino-acid polypeptide reads, in one-letter code: Glutathione-regulated potassium-efflux system ancillary protein KefG (183 aa).

Belongs to the NAD(P)H dehydrogenase (quinone) family. KefG subfamily. In terms of assembly, interacts with KefB.

It is found in the cell inner membrane. The enzyme catalyses a quinone + NADH + H(+) = a quinol + NAD(+). It carries out the reaction a quinone + NADPH + H(+) = a quinol + NADP(+). Functionally, regulatory subunit of a potassium efflux system that confers protection against electrophiles. Required for full activity of KefB. In Salmonella gallinarum (strain 287/91 / NCTC 13346), this protein is Glutathione-regulated potassium-efflux system ancillary protein KefG.